The primary structure comprises 360 residues: Nucleoporin SEH1 (360 aa).

WD repeat units follow at residues 10-49, 55-96, 111-152, 160-210, 217-258, and 276-315; these read DHKDLIHDVSFDFHGRRMATCSSDQSVKVWDKSENGDWHC, THSG…SNDK, DSRT…NLSQ, SCKL…RKYA, SVSD…KELS, and NHNSQVWRVSWNITGTVLASSGDDGTVRLWKANYMDNWKC.

Belongs to the WD repeat SEC13 family. In terms of assembly, component of the Nup107-160 subcomplex of the nuclear pore complex (NPC). The Nup107-160 subcomplex includes NUP160, NUP133, NUP107, NUP98, NUP85, NUP43, NUP37, SEH1 and SEC13. Component of the GATOR2 subcomplex, composed of MIOS, SEC13, SEH1L, WDR24 and WDR59. The GATOR2 complex interacts with CASTOR1 and CASTOR2; the interaction is negatively regulated by arginine. The GATOR2 complex interacts with SESN1, SESN2 and SESN3; the interaction is negatively regulated by amino acids.

The protein resides in the chromosome. The protein localises to the centromere. It localises to the kinetochore. Its subcellular location is the nucleus. It is found in the nuclear pore complex. The protein resides in the lysosome membrane. The GATOR2 complex is negatively regulated by the upstream amino acid sensors CASTOR1 and SESN2, which sequester the GATOR2 complex in absence of amino acids. In the presence of abundant amino acids, GATOR2 is released from CASTOR1 and SESN2 and activated. In terms of biological role, component of the Nup107-160 subcomplex of the nuclear pore complex (NPC). The Nup107-160 subcomplex is required for the assembly of a functional NPC. The Nup107-160 subcomplex is also required for normal kinetochore microtubule attachment, mitotic progression and chromosome segregation. This subunit plays a role in recruitment of the Nup107-160 subcomplex to the kinetochore. Functionally, as a component of the GATOR2 complex, functions as an activator of the amino acid-sensing branch of the mTORC1 signaling pathway. The GATOR2 complex indirectly activates mTORC1 through the inhibition of the GATOR1 subcomplex. GATOR2 probably acts as an E3 ubiquitin-protein ligase toward GATOR1. In the presence of abundant amino acids, the GATOR2 complex mediates ubiquitination of the NPRL2 core component of the GATOR1 complex, leading to GATOR1 inactivation. In the absence of amino acids, GATOR2 is inhibited, activating the GATOR1 complex. The sequence is that of Nucleoporin SEH1 (seh1l) from Xenopus tropicalis (Western clawed frog).